The primary structure comprises 186 residues: dTTP/UTP pyrophosphatase (186 aa).

D67 serves as the catalytic Proton acceptor.

This sequence belongs to the Maf family. YhdE subfamily. A divalent metal cation serves as cofactor.

Its subcellular location is the cytoplasm. The catalysed reaction is dTTP + H2O = dTMP + diphosphate + H(+). It catalyses the reaction UTP + H2O = UMP + diphosphate + H(+). Its function is as follows. Nucleoside triphosphate pyrophosphatase that hydrolyzes dTTP and UTP. May have a dual role in cell division arrest and in preventing the incorporation of modified nucleotides into cellular nucleic acids. The sequence is that of dTTP/UTP pyrophosphatase from Carboxydothermus hydrogenoformans (strain ATCC BAA-161 / DSM 6008 / Z-2901).